A 648-amino-acid chain; its full sequence is Copper methylamine oxidase (648 aa).

The propeptide occupies 1-9 (MTLNAESEA). Substrate is bound at residue 299–310 (AFDSGEYNIGNM). The active-site Proton acceptor is the Asp301. The cysteines at positions 320 and 346 are disulfide-linked. 382–387 (VANYEY) contacts substrate. Residue Tyr385 is the Schiff-base intermediate with substrate; via topaquinone of the active site. At Tyr385 the chain carries 2',4',5'-topaquinone. The Cu cation site is built by His436 and His438. Asp445, Phe446, and Asp584 together coordinate Mn(2+). His595 serves as a coordination point for Cu cation. Residues 629 to 648 (PTSTSTTQTGEADTCCHTDK) form a disordered region.

It belongs to the copper/topaquinone oxidase family. In terms of assembly, homodimer. It depends on Cu cation as a cofactor. Zn(2+) serves as cofactor. Requires L-topaquinone as cofactor. Mn(2+) is required as a cofactor. In terms of processing, topaquinone (TPQ) is generated by copper-dependent autoxidation of a specific tyrosyl residue.

The enzyme catalyses a primary methyl amine + O2 + H2O = an aldehyde + H2O2 + NH4(+). The chain is Copper methylamine oxidase (maoII) from Arthrobacter sp. (strain P1).